The primary structure comprises 243 residues: Carboxy-S-adenosyl-L-methionine synthase (243 aa).

S-adenosyl-L-methionine is bound by residues Tyr40, 65 to 67 (GSS), 90 to 91 (DN), 118 to 119 (DI), Asn133, and Arg200.

Belongs to the class I-like SAM-binding methyltransferase superfamily. Cx-SAM synthase family. As to quaternary structure, homodimer.

It catalyses the reaction prephenate + S-adenosyl-L-methionine = carboxy-S-adenosyl-L-methionine + 3-phenylpyruvate + H2O. Functionally, catalyzes the conversion of S-adenosyl-L-methionine (SAM) to carboxy-S-adenosyl-L-methionine (Cx-SAM). The polypeptide is Carboxy-S-adenosyl-L-methionine synthase (Shewanella frigidimarina (strain NCIMB 400)).